The primary structure comprises 273 residues: Serine acetyltransferase (273 aa).

Belongs to the transferase hexapeptide repeat family. As to quaternary structure, part of the cysteine synthase complex formed at a ratio of 1 copy of this protein and 2 copies of O-acetylserine sulfhydrylase (cysK). The complex reversibly dissociates in the presence of O-acetyl-L-serine in the absence of hydrogen sulfide.

It is found in the cytoplasm. It carries out the reaction L-serine + acetyl-CoA = O-acetyl-L-serine + CoA. Its pathway is amino-acid biosynthesis; L-cysteine biosynthesis; L-cysteine from L-serine: step 1/2. Sensitive to feedback inhibition by L-cysteine. The polypeptide is Serine acetyltransferase (cysE) (Salmonella typhimurium (strain LT2 / SGSC1412 / ATCC 700720)).